Here is a 531-residue protein sequence, read N- to C-terminus: MVNLRKKFEMKQANQPGRVPNYFRNKYHGYDDDMPNLLPTFIKLLDTEKDEDGAGLNAAEQIDRELKSRKCDILKFRNLTILELPHLNEFLFSTELNPPISDQVRHRDMNAPLSHYFIHTSLKSYFTGNNVFGRLYSIEPIIDALKQGVRVVELDLLPFGKDGICVRPKWNFEKPLELQECLDAIKQHAFTPTRSYPVIITIKDSLKPDLQSKVTQMIDQTFGDMVYHEDPQQSLEEFPSPAELQNKILISRRPPTKLLYAKAVENGVELEIQEGSTDKNYQSVVGFHAVEPRGMLQKALTDDVQQPGWYERDVISFTQNKFLRTRPKKRNLLSNPPYKPQRAWMHGAQMIALSRQDDKEKLWLMQGMFRANGGCGYVKKPNFLLNAGSSGVFYPTENPVVVKTLKVKIYMGDGWIVDFKKRIGRLSKPDLYVRISIAGVPHDEKIMNTTVKNNEWKPTWGEEFTFPLTYPDLALISFEVYDYEVSTPDYFCGQTCLPVSELIEGIRAVPLYDERGKACSSTMLLTRFKWS.

The PI-PLC X-box domain occupies 107–253 (RDMNAPLSHY…LQNKILISRR (147 aa)). The 121-residue stretch at 265 to 385 (ENGVELEIQE…GYVKKPNFLL (121 aa)) folds into the PI-PLC Y-box domain. Residue Ser-276 is modified to Phosphoserine. The C2 domain occupies 386–513 (NAGSSGVFYP…EGIRAVPLYD (128 aa)).

It depends on Ca(2+) as a cofactor. Expressed in leaves, roots, flowers and siliques.

The protein localises to the cell membrane. It catalyses the reaction a 1,2-diacyl-sn-glycero-3-phospho-(1D-myo-inositol-4,5-bisphosphate) + H2O = 1D-myo-inositol 1,4,5-trisphosphate + a 1,2-diacyl-sn-glycerol + H(+). The production of the second messenger molecules diacylglycerol (DAG) and inositol 1,4,5-trisphosphate (IP3) is mediated by activated phosphatidylinositol-specific phospholipase C enzymes. The chain is Phosphoinositide phospholipase C 9 (PLC9) from Arabidopsis thaliana (Mouse-ear cress).